An 891-amino-acid chain; its full sequence is Valine--tRNA ligase (891 aa).

The 'HIGH' region motif lies at 43 to 53 (PFTSGTLHLGH). A 'KMSKS' region motif is present at residues 536–540 (KMSKS). Lysine 539 contributes to the ATP binding site.

This sequence belongs to the class-I aminoacyl-tRNA synthetase family. ValS type 2 subfamily.

Its subcellular location is the cytoplasm. The enzyme catalyses tRNA(Val) + L-valine + ATP = L-valyl-tRNA(Val) + AMP + diphosphate. Catalyzes the attachment of valine to tRNA(Val). As ValRS can inadvertently accommodate and process structurally similar amino acids such as threonine, to avoid such errors, it has a 'posttransfer' editing activity that hydrolyzes mischarged Thr-tRNA(Val) in a tRNA-dependent manner. The protein is Valine--tRNA ligase of Pyrococcus furiosus (strain ATCC 43587 / DSM 3638 / JCM 8422 / Vc1).